The sequence spans 144 residues: Transcriptional regulator SlyA (144 aa).

The HTH marR-type domain occupies 2–135 (ESPLGSDLAR…LIKLIAKLEH (134 aa)). The H-T-H motif DNA-binding region spans 49–72 (QIQLAKAIGIEQPSLVRTLDQLEE).

It belongs to the SlyA family. Homodimer.

Transcription regulator that can specifically activate or repress expression of target genes. The polypeptide is Transcriptional regulator SlyA (Escherichia coli O127:H6 (strain E2348/69 / EPEC)).